We begin with the raw amino-acid sequence, 797 residues long: Complex I intermediate-associated protein 84, mitochondrial (797 aa).

The transit peptide at 1–69 (MRSHLARNAT…ALCTRTSKRT (69 aa)) directs the protein to the mitochondrion.

The protein localises to the mitochondrion. In terms of biological role, chaperone protein involved in the assembly of the mitochondrial NADH:ubiquinone oxidoreductase complex (complex I). This Neurospora crassa (strain ATCC 24698 / 74-OR23-1A / CBS 708.71 / DSM 1257 / FGSC 987) protein is Complex I intermediate-associated protein 84, mitochondrial (cia84).